A 155-amino-acid polypeptide reads, in one-letter code: Ribosomal RNA large subunit methyltransferase H (155 aa).

Residues glycine 104 and 123 to 128 (LGPMTF) each bind S-adenosyl-L-methionine.

Belongs to the RNA methyltransferase RlmH family. As to quaternary structure, homodimer.

It is found in the cytoplasm. It carries out the reaction pseudouridine(1915) in 23S rRNA + S-adenosyl-L-methionine = N(3)-methylpseudouridine(1915) in 23S rRNA + S-adenosyl-L-homocysteine + H(+). In terms of biological role, specifically methylates the pseudouridine at position 1915 (m3Psi1915) in 23S rRNA. The chain is Ribosomal RNA large subunit methyltransferase H from Nitratidesulfovibrio vulgaris (strain DSM 19637 / Miyazaki F) (Desulfovibrio vulgaris).